The primary structure comprises 31 residues: U6-ctenitoxin-Co1a (31 aa).

2 disulfides stabilise this stretch: C2–C18 and C9–C23.

Expressed by the venom gland.

Its subcellular location is the secreted. Antagonist of L-type calcium channels (Cav1/CACNA1). The chain is U6-ctenitoxin-Co1a from Ctenus ornatus (Brazilian spider).